The following is a 359-amino-acid chain: Stearoyl-CoA desaturase (359 aa).

Over 1-72 (MPAHLLQDDI…EGPSPKVEYV (72 aa)) the chain is Cytoplasmic. The helical transmembrane segment at 73 to 93 (WRNIILMSLLHLGALYGITLI) threads the bilayer. A substrate-binding site is contributed by N75. Residues 94-97 (PTCK) lie on the Lumenal side of the membrane. A helical transmembrane segment spans residues 98–118 (FYTWLWGVFYYFVSALGITAG). At 119–217 (AHRLWSHRSY…EKLVMFQRRY (99 aa)) the chain is on the cytoplasmic side. Fe cation contacts are provided by H120 and H125. Positions 120–125 (HRLWSH) match the Histidine box-1 motif. 3 residues coordinate substrate: N148, R155, and D156. Positions 157, 160, and 161 each coordinate Fe cation. Positions 157-161 (HRAHH) match the Histidine box-2 motif. Substrate is bound by residues R188 and K189. Phosphoserine is present on residues S198 and S203. The chain crosses the membrane as a helical span at residues 218-237 (YKPGLLMMCFILPTLVPWYF). The Lumenal segment spans residues 238 to 241 (WGET). A helical transmembrane segment spans residues 242-263 (FQNSVFVATFLRYAVVLNATWL). W262 is a substrate binding site. Over 264 to 359 (VNSAAHLFGY…RTGDGNYKSG (96 aa)) the chain is Cytoplasmic. Residues H269, H298, H301, and H302 each contribute to the Fe cation site. A Histidine box-3 motif is present at residues 298 to 302 (HNYHH).

The protein belongs to the fatty acid desaturase type 1 family. In terms of assembly, may self-associate and form homodimers. It depends on Fe(2+) as a cofactor. Detected in fetal liver, lung and brain. Highly expressed in adult adipose tissue, and at lower levels in adult brain and lung.

It localises to the endoplasmic reticulum membrane. It catalyses the reaction octadecanoyl-CoA + 2 Fe(II)-[cytochrome b5] + O2 + 2 H(+) = (9Z)-octadecenoyl-CoA + 2 Fe(III)-[cytochrome b5] + 2 H2O. The catalysed reaction is hexadecanoyl-CoA + 2 Fe(II)-[cytochrome b5] + O2 + 2 H(+) = (9Z)-hexadecenoyl-CoA + 2 Fe(III)-[cytochrome b5] + 2 H2O. Its function is as follows. Stearoyl-CoA desaturase that utilizes O(2) and electrons from reduced cytochrome b5 to introduce the first double bond into saturated fatty acyl-CoA substrates. Catalyzes the insertion of a cis double bond at the delta-9 position into fatty acyl-CoA substrates including palmitoyl-CoA and stearoyl-CoA. Gives rise to a mixture of 16:1 and 18:1 unsaturated fatty acids. Plays an important role in lipid biosynthesis. Plays an important role in regulating the expression of genes that are involved in lipogenesis and in regulating mitochondrial fatty acid oxidation. Plays an important role in body energy homeostasis. Contributes to the biosynthesis of membrane phospholipids, cholesterol esters and triglycerides. The sequence is that of Stearoyl-CoA desaturase (SCD) from Homo sapiens (Human).